Consider the following 131-residue polypeptide: Holo-[acyl-carrier-protein] synthase (131 aa).

Mg(2+) contacts are provided by Asp8 and Glu58.

The protein belongs to the P-Pant transferase superfamily. AcpS family. The cofactor is Mg(2+).

Its subcellular location is the cytoplasm. The catalysed reaction is apo-[ACP] + CoA = holo-[ACP] + adenosine 3',5'-bisphosphate + H(+). Transfers the 4'-phosphopantetheine moiety from coenzyme A to a Ser of acyl-carrier-protein. This Oenococcus oeni (strain ATCC BAA-331 / PSU-1) protein is Holo-[acyl-carrier-protein] synthase.